The following is a 547-amino-acid chain: MAELTISSDEIRSAIENYTASYSPEASREEVGLVTDTSDGIAHVSGLPSAMANELLEFPGGILGVALNLDATEIGAVILGDYENIQEGQEVKRTGDVLSVPVGDAFLGRVINPLGQPIDGLGEIESNETRALELQAASVLERQPVEEPLQTGIKAIDAMTPIGRGQRQLVIGDRKTGKTAVCIDAILNQKANWETGDEKQQVRCIYVAIGQKGSTIAGVKAALEEQGAMEYTTIVAAPASDSAGFKWLAPYTGSAIGQHWMYQGKHVLVVFDDLTKQAEAYRAISLLLRRPPGREAYPGDVFYLHSRLLERSAKLSDALGGGSLTALPIIETKANDVSAYIPTNVISITDGQVFLESDLFNKGVRPAINVGISVSRVGGAAQTKGMKKVSGSLRLELAQFRELEAFSAFASDLDAASKAQLERGARLVELLKQDQYSPIPVEDQIVSIYLAGEGVFDSVPVGDVRRFEAELLDELHRTASGVYESIKGGKALDADNAKALVEATDKFKETFIASDGSRVVNEAEAEALDAGEVGHEQINVKRTTVSK.

172–179 (GDRKTGKT) contributes to the ATP binding site.

It belongs to the ATPase alpha/beta chains family. In terms of assembly, F-type ATPases have 2 components, CF(1) - the catalytic core - and CF(0) - the membrane proton channel. CF(1) has five subunits: alpha(3), beta(3), gamma(1), delta(1), epsilon(1). CF(0) has three main subunits: a(1), b(2) and c(9-12). The alpha and beta chains form an alternating ring which encloses part of the gamma chain. CF(1) is attached to CF(0) by a central stalk formed by the gamma and epsilon chains, while a peripheral stalk is formed by the delta and b chains.

The protein resides in the cell membrane. The enzyme catalyses ATP + H2O + 4 H(+)(in) = ADP + phosphate + 5 H(+)(out). Produces ATP from ADP in the presence of a proton gradient across the membrane. The alpha chain is a regulatory subunit. The sequence is that of ATP synthase subunit alpha from Rhodococcus jostii (strain RHA1).